Here is a 179-residue protein sequence, read N- to C-terminus: Large ribosomal subunit protein uL5 (179 aa).

The protein belongs to the universal ribosomal protein uL5 family. As to quaternary structure, part of the 50S ribosomal subunit; part of the 5S rRNA/L5/L18/L25 subcomplex. Contacts the 5S rRNA and the P site tRNA. Forms a bridge to the 30S subunit in the 70S ribosome.

Its function is as follows. This is one of the proteins that bind and probably mediate the attachment of the 5S RNA into the large ribosomal subunit, where it forms part of the central protuberance. In the 70S ribosome it contacts protein S13 of the 30S subunit (bridge B1b), connecting the 2 subunits; this bridge is implicated in subunit movement. Contacts the P site tRNA; the 5S rRNA and some of its associated proteins might help stabilize positioning of ribosome-bound tRNAs. The sequence is that of Large ribosomal subunit protein uL5 from Vibrio atlanticus (strain LGP32) (Vibrio splendidus (strain Mel32)).